The sequence spans 131 residues: Lymphocyte antigen 6C1 (131 aa).

The N-terminal stretch at 1–26 (MDTSHTTKSCVLILLVALLCAERAQG) is a signal peptide. The UPAR/Ly6 domain occupies 27 to 115 (LQCYECYGVP…PTAGSTWTMA (89 aa)). Cystine bridges form between Cys-29-Cys-53, Cys-32-Cys-41, Cys-46-Cys-74, Cys-78-Cys-95, and Cys-96-Cys-101. Gly-109 carries GPI-anchor amidated glycine lipidation. Residues 110 to 131 (STWTMAGVLLFSLSSVVLQTLL) constitute a propeptide, removed in mature form.

It is found in the cell membrane. The polypeptide is Lymphocyte antigen 6C1 (Ly6c1) (Mus musculus (Mouse)).